The sequence spans 218 residues: Ribose-5-phosphate isomerase A (218 aa).

Residues 28 to 31 (TGST), 81 to 84 (DGAD), and 94 to 97 (KGGG) each bind substrate. The active-site Proton acceptor is Glu103. A substrate-binding site is contributed by Lys121.

Belongs to the ribose 5-phosphate isomerase family. In terms of assembly, homodimer.

The catalysed reaction is aldehydo-D-ribose 5-phosphate = D-ribulose 5-phosphate. It functions in the pathway carbohydrate degradation; pentose phosphate pathway; D-ribose 5-phosphate from D-ribulose 5-phosphate (non-oxidative stage): step 1/1. Catalyzes the reversible conversion of ribose-5-phosphate to ribulose 5-phosphate. The chain is Ribose-5-phosphate isomerase A from Shewanella sediminis (strain HAW-EB3).